The sequence spans 283 residues: Bifunctional protein FolD (283 aa).

NADP(+) is bound by residues 164 to 166, serine 189, and isoleucine 230; that span reads GRS.

The protein belongs to the tetrahydrofolate dehydrogenase/cyclohydrolase family. As to quaternary structure, homodimer.

The catalysed reaction is (6R)-5,10-methylene-5,6,7,8-tetrahydrofolate + NADP(+) = (6R)-5,10-methenyltetrahydrofolate + NADPH. The enzyme catalyses (6R)-5,10-methenyltetrahydrofolate + H2O = (6R)-10-formyltetrahydrofolate + H(+). The protein operates within one-carbon metabolism; tetrahydrofolate interconversion. Catalyzes the oxidation of 5,10-methylenetetrahydrofolate to 5,10-methenyltetrahydrofolate and then the hydrolysis of 5,10-methenyltetrahydrofolate to 10-formyltetrahydrofolate. In Pelobacter propionicus (strain DSM 2379 / NBRC 103807 / OttBd1), this protein is Bifunctional protein FolD.